A 497-amino-acid chain; its full sequence is MGLSWKERVFMALLGVAAASGLTMLVLILVKAINVLLPADTKFGIVFDAGSSHTSLFVYQWPANKEKDTGVVSQALTCQIEGPGISSYTSDPTQAGESLKSCLEEALALIPQAQHPETPTFLGSTAGMRLLSQKNSSQARDILAAVSQTLSKSPVDFWGAKILAGQDEGAFGWITINYVLGMLLKYSSGQWILPEEGMLVGALDLGGASTQISFVPQGPILDQSTQVTFRLYGANYSVYTHSYLCFGRDQILNRLLAKLAQDRLSSQVAPVRHPCYHSGYQAILPLSSLYDSPCIHTTDSLNHTQNLTVEGTGDPGNCVVALRSLFNFSSCKGQKDCAFNGIYQPPVHGQFYAFSNFYYTFHFLNLTSRQSLNTVNDTVWKFCQKPWKLVEVSYPGQERWLRDYCASGLYILVLLLEGYKFSEETWPNIQFQKQAGDTDIGWTLGFMLNLTGMIPAEAPTHWRAQSYSIWTAGVVFAVLTLVAILGAAAIQIFWTQD.

Over 1 to 8 (MGLSWKER) the chain is Cytoplasmic. The helical transmembrane segment at 9 to 29 (VFMALLGVAAASGLTMLVLIL) threads the bilayer. Topologically, residues 30 to 473 (VKAINVLLPA…AQSYSIWTAG (444 aa)) are extracellular. A disulfide bond links C78 and C102. E168 serves as the catalytic Proton acceptor. An intrachain disulfide couples C245 to C294. N-linked (GlcNAc...) asparagine glycosylation occurs at N306. A disulfide bond links C331 and C337. N365 carries an N-linked (GlcNAc...) asparagine glycan. Residues C383 and C405 are joined by a disulfide bond. A helical transmembrane segment spans residues 474–494 (VVFAVLTLVAILGAAAIQIFW). Residues 495–497 (TQD) are Cytoplasmic-facing.

The protein belongs to the GDA1/CD39 NTPase family. Ca(2+) serves as cofactor. Requires Mg(2+) as cofactor. In terms of processing, N-glycosylated. In terms of tissue distribution, expressed in liver, jejunum and kidney.

Its subcellular location is the cell membrane. It carries out the reaction a ribonucleoside 5'-triphosphate + 2 H2O = a ribonucleoside 5'-phosphate + 2 phosphate + 2 H(+). Its function is as follows. Canalicular ectonucleoside NTPDase responsible for the main hepatic NTPDase activity. Ectonucleoside NTPDases catalyze the hydrolysis of gamma- and beta-phosphate residues of nucleotides, playing a central role in concentration of extracellular nucleotides. Has activity toward ATP, ADP, UTP and UDP, but not toward AMP. This Mus musculus (Mouse) protein is Ectonucleoside triphosphate diphosphohydrolase 8 (Entpd8).